A 245-amino-acid polypeptide reads, in one-letter code: CX3CL1-binding protein 2 (245 aa).

The first 25 residues, 1-25 (MSFCYVRTISIALFLFIFLFLNNGN), serve as a signal peptide directing secretion. At 26-164 (FKNNFYRKDN…LHFNNVRAAT (139 aa)) the chain is on the cytoplasmic side. Positions 46 to 50 (RSLAE) are PEXEL motif. A disordered region spans residues 52-71 (QKVETEQSTPAKPEPTEFVN). A helical membrane pass occupies residues 165-185 (IIFIAGFLSIFAILLTISAVA). Topologically, residues 186–196 (ATSKFTNNMLA) are extracellular. The helical transmembrane segment at 197-217 (IAGVGALGSALSLPGMALLFV) threads the bilayer. The Cytoplasmic segment spans residues 218–245 (PAMLYVLNRKNEITNHYSERIIKQVSNF).

In terms of assembly, monomer. May form (via the first cytoplasmic domain) homodimers or homotrimers; disulfide-linked. Interacts with MAHRP1. May interact (via first cytoplasmic domain) with SBP1; the interaction is likely to occur at the ring stage in the Maurer's clefts and is weaken by ATP. Interacts (via extracellular domain) with human chemokine CX3CL1; the interaction mediates the adhesion of infected erythrocytes with endothelial cells.

The protein resides in the host cell membrane. During the asexual blood stage and probably at the ring/trophozoite stages, plays a role in Maurer's cleft formation and/or morphology. Also, involved in the loading of the virulence factor EMP1 into the Maurer's cleft membrane. By binding to host chemokine CX3CL1, mediates the cytoadherence of host erythrocytes infected with parasite mature forms (late trophozoite and schizont) to endothelial cells, which sequesters them away from the circulation and thus prevents their elimination by the host spleen. This is CX3CL1-binding protein 2 from Plasmodium falciparum (isolate 3D7).